The sequence spans 191 residues: UPF0669 protein C6orf120 homolog (191 aa).

Residues 1-30 form the signal peptide; it reads MAAPRGRAAPWTTALLLLLTSQILSPGSCA. N-linked (GlcNAc...) asparagine glycosylation is present at Asn-53.

The protein belongs to the UPF0669 family.

It is found in the secreted. May be involved in induction of apoptosis in CD4(+) T-cells, but not CD8(+) T-cells or hepatocytes. This Macaca fascicularis (Crab-eating macaque) protein is UPF0669 protein C6orf120 homolog.